We begin with the raw amino-acid sequence, 392 residues long: S-adenosylmethionine synthase (392 aa).

Histidine 17 lines the ATP pocket. Aspartate 19 contributes to the Mg(2+) binding site. Glutamate 45 is a K(+) binding site. The L-methionine site is built by glutamate 58 and glutamine 102. The segment at 102-112 (QSADIAQGVDA) is flexible loop. Residues 169–171 (DAK), 235–236 (KF), aspartate 244, 250–251 (RK), alanine 267, and lysine 271 each bind ATP. Aspartate 244 serves as a coordination point for L-methionine. Lysine 275 serves as a coordination point for L-methionine.

It belongs to the AdoMet synthase family. In terms of assembly, homotetramer; dimer of dimers. The cofactor is Mg(2+). It depends on K(+) as a cofactor.

The protein resides in the cytoplasm. It carries out the reaction L-methionine + ATP + H2O = S-adenosyl-L-methionine + phosphate + diphosphate. It functions in the pathway amino-acid biosynthesis; S-adenosyl-L-methionine biosynthesis; S-adenosyl-L-methionine from L-methionine: step 1/1. Its function is as follows. Catalyzes the formation of S-adenosylmethionine (AdoMet) from methionine and ATP. The overall synthetic reaction is composed of two sequential steps, AdoMet formation and the subsequent tripolyphosphate hydrolysis which occurs prior to release of AdoMet from the enzyme. In Methylobacterium nodulans (strain LMG 21967 / CNCM I-2342 / ORS 2060), this protein is S-adenosylmethionine synthase.